Consider the following 83-residue polypeptide: Mu-theraphotoxin-Hhn2e (83 aa).

A signal peptide spans 1 to 21; the sequence is MKASMFLALAGLVLLFVVGYA. Residues 22–48 constitute a propeptide that is removed on maturation; it reads SESEEKEFPRELLSKIFAVDDFKGEER. Disulfide bonds link C50-C65, C57-C70, and C64-C77. Leucine amide is present on L81.

It belongs to the neurotoxin 10 (Hwtx-1) family. 15 (Hntx-3) subfamily. Monomer. As to expression, expressed by the venom gland.

It localises to the secreted. Its function is as follows. Lethal neurotoxin. Selectively blocks tetrodotoxin-sensitive voltage-gated sodium channels (Nav). Does not affect tetrodotoxin-resistant voltage-gated sodium channels or calcium channels. The polypeptide is Mu-theraphotoxin-Hhn2e (Cyriopagopus hainanus (Chinese bird spider)).